Reading from the N-terminus, the 550-residue chain is Hydroxylamine reductase (550 aa).

Cys3, Cys6, Cys18, and Cys25 together coordinate [2Fe-2S] cluster. Hybrid [4Fe-2O-2S] cluster is bound by residues His249, Glu273, Cys317, Cys405, Cys433, Cys458, Glu492, and Lys494. Cys405 is modified (cysteine persulfide).

Belongs to the HCP family. Requires [2Fe-2S] cluster as cofactor. Hybrid [4Fe-2O-2S] cluster is required as a cofactor.

It localises to the cytoplasm. The enzyme catalyses A + NH4(+) + H2O = hydroxylamine + AH2 + H(+). Its function is as follows. Catalyzes the reduction of hydroxylamine to form NH(3) and H(2)O. The sequence is that of Hydroxylamine reductase from Pectobacterium carotovorum subsp. carotovorum (strain PC1).